A 92-amino-acid polypeptide reads, in one-letter code: Small ribosomal subunit protein uS19 (92 aa).

Belongs to the universal ribosomal protein uS19 family.

In terms of biological role, protein S19 forms a complex with S13 that binds strongly to the 16S ribosomal RNA. The protein is Small ribosomal subunit protein uS19 (rpsS) of Synechocystis sp. (strain ATCC 27184 / PCC 6803 / Kazusa).